Here is a 265-residue protein sequence, read N- to C-terminus: NADH-ubiquinone oxidoreductase chain 5 (265 aa).

8 helical membrane-spanning segments follow: residues 10–30, 50–70, 92–112, 113–133, 153–173, 183–203, 215–235, and 244–264; these read ISFY…LKFL, IVMT…VLLI, ILLV…PNLI, SILL…IYFQ, VALL…YIFY, MMII…QIPF, TPVS…YLLI, and WWMA…AGLG.

It belongs to the complex I subunit 5 family.

The protein resides in the mitochondrion inner membrane. The catalysed reaction is a ubiquinone + NADH + 5 H(+)(in) = a ubiquinol + NAD(+) + 4 H(+)(out). Core subunit of the mitochondrial membrane respiratory chain NADH dehydrogenase (Complex I) that is believed to belong to the minimal assembly required for catalysis. Complex I functions in the transfer of electrons from NADH to the respiratory chain. The immediate electron acceptor for the enzyme is believed to be ubiquinone. In Anopheles quadriannulatus (Mosquito), this protein is NADH-ubiquinone oxidoreductase chain 5 (ND5).